Reading from the N-terminus, the 496-residue chain is Lysine--tRNA ligase (496 aa).

Residues glutamate 409 and glutamate 416 each coordinate Mg(2+).

The protein belongs to the class-II aminoacyl-tRNA synthetase family. Homodimer. Requires Mg(2+) as cofactor.

It is found in the cytoplasm. It carries out the reaction tRNA(Lys) + L-lysine + ATP = L-lysyl-tRNA(Lys) + AMP + diphosphate. This Streptococcus agalactiae serotype III (strain NEM316) protein is Lysine--tRNA ligase.